The chain runs to 128 residues: Cyclic ether formation enzyme gkaZ (128 aa).

An N-terminal signal peptide occupies residues methionine 1 to serine 36. The next 2 helical transmembrane spans lie at leucine 61–tryptophan 81 and tryptophan 107–valine 127.

Belongs to the cyclic ether formation enzyme xenC family.

The protein resides in the membrane. It functions in the pathway mycotoxin biosynthesis. In terms of biological role, cyclic ether formation enzyme; part of the gene cluster that mediates the biosynthesis of GKK1032, fungal natural products containing a macrocyclic para-cyclophane connected to a decahydrofluorene ring system that show potent antitumor activities. Within the pathway, gkaZ functions synergistically with gkaB and gkaX to form the cyclophane. The pathway begins with the PKS-NRPS gkaA which, with the help of the trans-enoyl reductase gkaC, synthesizes the polyketide-tyrosyl acyl thioester product which can be reductively off-loaded by the terminal reductase (R) domain in gkaA. The alpha/beta hydrolase gkaG is then required to catalyze the subsequent Knoevenagel condensation that affords the 3-pyrrolin-2-one ring, whereas the three proteins gkaB, gkaX and gkaZ then function synergistically to form the cyclophane. The polypeptide is Cyclic ether formation enzyme gkaZ (Penicillium citrinum).